The primary structure comprises 444 residues: Ribosomal protein uS12 methylthiotransferase RimO (444 aa).

The 117-residue stretch at 4-120 (KSAALVSLGC…LKSFIRDHEA (117 aa)) folds into the MTTase N-terminal domain. [4Fe-4S] cluster is bound by residues C13, C49, C83, C157, C161, and C164. The 229-residue stretch at 143 to 371 (VEGRSSAYVK…LELQRGISRR (229 aa)) folds into the Radical SAM core domain. A TRAM domain is found at 374–442 (ESLVGRVLPV…DYDVEAELLS (69 aa)).

This sequence belongs to the methylthiotransferase family. RimO subfamily. [4Fe-4S] cluster serves as cofactor.

The protein localises to the cytoplasm. It catalyses the reaction L-aspartate(89)-[ribosomal protein uS12]-hydrogen + (sulfur carrier)-SH + AH2 + 2 S-adenosyl-L-methionine = 3-methylsulfanyl-L-aspartate(89)-[ribosomal protein uS12]-hydrogen + (sulfur carrier)-H + 5'-deoxyadenosine + L-methionine + A + S-adenosyl-L-homocysteine + 2 H(+). Catalyzes the methylthiolation of an aspartic acid residue of ribosomal protein uS12. This Syntrophobacter fumaroxidans (strain DSM 10017 / MPOB) protein is Ribosomal protein uS12 methylthiotransferase RimO.